The following is a 529-amino-acid chain: Zinc finger protein 572 (529 aa).

Residues 1-125 (MEQEQKLLVS…TGPAGQQNPS (125 aa)) are disordered. Lys6 is covalently cross-linked (Glycyl lysine isopeptide (Lys-Gly) (interchain with G-Cter in SUMO2)). Positions 22–42 (KNTITGDESKNNLKTVQFSNS) are enriched in polar residues. The segment covering 43–68 (KADKERASKWSRSDGPENYKDEDTKE) has biased composition (basic and acidic residues). Polar residues predominate over residues 87 to 96 (NDSNLGSQRN). C2H2-type zinc fingers lie at residues 131–153 (YKCS…QRTH), 159–181 (YRCS…LRTH), 187–209 (YQCG…ERTH), 215–237 (YKCP…HRSH), 243–265 (YECP…QRTH), 271–293 (YKCP…QRTH), 299–321 (YKCP…QRIH), 327–349 (YQCI…QKMH), 383–405 (YKCC…QRTH), 411–433 (YRCS…QRTH), 439–461 (YKCP…RRTH), and 467–489 (YKCT…RKIH).

The protein belongs to the krueppel C2H2-type zinc-finger protein family.

Its subcellular location is the nucleus. In terms of biological role, may be involved in transcriptional regulation. The sequence is that of Zinc finger protein 572 (ZNF572) from Bos taurus (Bovine).